A 311-amino-acid chain; its full sequence is Methionyl-tRNA formyltransferase (311 aa).

109 to 112 (SLLP) lines the (6S)-5,6,7,8-tetrahydrofolate pocket.

The protein belongs to the Fmt family.

It carries out the reaction L-methionyl-tRNA(fMet) + (6R)-10-formyltetrahydrofolate = N-formyl-L-methionyl-tRNA(fMet) + (6S)-5,6,7,8-tetrahydrofolate + H(+). Its function is as follows. Attaches a formyl group to the free amino group of methionyl-tRNA(fMet). The formyl group appears to play a dual role in the initiator identity of N-formylmethionyl-tRNA by promoting its recognition by IF2 and preventing the misappropriation of this tRNA by the elongation apparatus. The protein is Methionyl-tRNA formyltransferase of Staphylococcus aureus (strain bovine RF122 / ET3-1).